Consider the following 261-residue polypeptide: Hemin import ATP-binding protein HmuV (261 aa).

The region spanning 8–243 (IRVTDLSYSV…ESIRTAYGHE (236 aa)) is the ABC transporter domain. 40–47 (GRNGAGKS) lines the ATP pocket.

It belongs to the ABC transporter superfamily. Heme (hemin) importer (TC 3.A.1.14.5) family. In terms of assembly, the complex is composed of two ATP-binding proteins (HmuV), two transmembrane proteins (HmuU) and a solute-binding protein (HmuT).

It localises to the cell membrane. Functionally, part of the ABC transporter complex HmuTUV involved in hemin import. Responsible for energy coupling to the transport system. In Deinococcus radiodurans (strain ATCC 13939 / DSM 20539 / JCM 16871 / CCUG 27074 / LMG 4051 / NBRC 15346 / NCIMB 9279 / VKM B-1422 / R1), this protein is Hemin import ATP-binding protein HmuV.